Here is an 828-residue protein sequence, read N- to C-terminus: MNLSRRDFMKTNAAVAAAAVAGLAIPVKNVEASPDKIIKWDKAPCRFCGTGCSVLVGTQNGRVVASQGDPDADVNRGLNCIKGYFLPKIMYGKDRLTSPMLRMTNGKFDKHGEFTPVSWDQAFTIMAEKFKKALKEKGPNGAGMFTSGQSTIFEGIAKSKLFKAGLRSNNIDPNARHCMASAAVAFMRTFGMDEPMGCYDDIEKADAFVLWGSNMAEMHPILWSRISDRRLSHPDVKVAVLSTFEHRSFELADLGVIFTPQSDLAIMNYIANYLIQHDAIDHDFIQKHTKFKRGETDIGYGLRETHELEKAAKNVKTAGKMHDSDFEEYKKLVAPYTLEKAHEISGVPKEQLEALAKMYADPKLNIVSFWTMGFNQHTRGVWANHLIYNIHLLTGKISKPGCGPFSLTGQPSACGTAREVGTFAHRLPADLVVTNPKHVEKAEKLWKLPKGVIQTQVGYHAVAQDRALKDKKMNVLWQMCTNNMQGGPNINQERFPGWRDEENFVIVSDPYPTVSALAADLILPTAMWVEKEGAYGNAERRTQFWYQQVKAPGESKSDVWQLVEFSKYFTTDEMWPAEVLAANPEYKGKTLYEVLFRNGQVDKFQVPTDKPGYMNDEAEHFGFYLQKGLFEEYAVFGRGHGHDLADFETYHKARGLRWPVVDGKETLWRYREGYDPYVKEGEGVAFYGYPDKKAIILAVPYEPPAEAPNAEYDLWLTTGRVLEHWHTGTMTRRVPELHRSFPNNLVWMHPLDAKKRGLRHGDKVKISSRRGEMISHLDTRGRNKVPQGLVYTTFFDAGQLANYLTLDATDPISKETDFKKCAVKVEKA.

The segment at residues 1 to 32 (MNLSRRDFMKTNAAVAAAAVAGLAIPVKNVEA) is a signal peptide (tat-type signal). The region spanning 38–94 (IKWDKAPCRFCGTGCSVLVGTQNGRVVASQGDPDADVNRGLNCIKGYFLPKIMYGKD) is the 4Fe-4S Mo/W bis-MGD-type domain. Residues Cys45, Cys48, Cys52, and Cys80 each contribute to the [4Fe-4S] cluster site. Residues Lys82, Gln149, Asn174, Cys178, 211–218 (WGSNMAEM), 242–246 (STFEH), 261–263 (QSD), Met372, Gln376, Asn482, 508–509 (SD), Lys531, Asp558, and 718–727 (TGRVLEHWHT) each bind Mo-bis(molybdopterin guanine dinucleotide). Residue Phe794 participates in substrate binding. Mo-bis(molybdopterin guanine dinucleotide)-binding residues include Asn802 and Lys819.

The protein belongs to the prokaryotic molybdopterin-containing oxidoreductase family. NasA/NapA/NarB subfamily. As to quaternary structure, component of the periplasmic nitrate reductase NapAB complex composed of NapA and NapB. Requires [4Fe-4S] cluster as cofactor. Mo-bis(molybdopterin guanine dinucleotide) is required as a cofactor. Post-translationally, predicted to be exported by the Tat system. The position of the signal peptide cleavage has not been experimentally proven.

Its subcellular location is the periplasm. It carries out the reaction 2 Fe(II)-[cytochrome] + nitrate + 2 H(+) = 2 Fe(III)-[cytochrome] + nitrite + H2O. Its function is as follows. Catalytic subunit of the periplasmic nitrate reductase complex NapAB. Receives electrons from NapB and catalyzes the reduction of nitrate to nitrite. The polypeptide is Periplasmic nitrate reductase (Pasteurella multocida (strain Pm70)).